The chain runs to 170 residues: Transcription factor E (170 aa).

Residues 1–93 (MKDVYLYIVE…TWYVNDEVIS (93 aa)) form the HTH TFE/IIEalpha-type domain.

This sequence belongs to the TFE family. In terms of assembly, monomer. Interaction with RNA polymerase subunits RpoF and RpoE is necessary for Tfe stimulatory transcription activity. Able to interact with Tbp and RNA polymerase in the absence of DNA promoter. Interacts both with the preinitiation and elongation complexes.

Its function is as follows. Transcription factor that plays a role in the activation of archaeal genes transcribed by RNA polymerase. Facilitates transcription initiation by enhancing TATA-box recognition by TATA-box-binding protein (Tbp), and transcription factor B (Tfb) and RNA polymerase recruitment. Not absolutely required for transcription in vitro, but particularly important in cases where Tbp or Tfb function is not optimal. It dynamically alters the nucleic acid-binding properties of RNA polymerases by stabilizing the initiation complex and destabilizing elongation complexes. Seems to translocate with the RNA polymerase following initiation and acts by binding to the non template strand of the transcription bubble in elongation complexes. The protein is Transcription factor E of Pyrobaculum calidifontis (strain DSM 21063 / JCM 11548 / VA1).